The following is a 148-amino-acid chain: Large ribosomal subunit protein uL11 (148 aa).

Residues 89 to 108 (EKKKGSGAHKPGKEKVGQVT) are disordered.

Belongs to the universal ribosomal protein uL11 family. As to quaternary structure, part of the ribosomal stalk of the 50S ribosomal subunit. Interacts with L10 and the large rRNA to form the base of the stalk. L10 forms an elongated spine to which L12 dimers bind in a sequential fashion forming a multimeric L10(L12)X complex. In terms of processing, one or more lysine residues are methylated.

Functionally, forms part of the ribosomal stalk which helps the ribosome interact with GTP-bound translation factors. The polypeptide is Large ribosomal subunit protein uL11 (Anaeromyxobacter sp. (strain Fw109-5)).